The sequence spans 518 residues: Glutamate--cysteine ligase (518 aa).

The protein belongs to the glutamate--cysteine ligase type 1 family. Type 1 subfamily.

The enzyme catalyses L-cysteine + L-glutamate + ATP = gamma-L-glutamyl-L-cysteine + ADP + phosphate + H(+). It functions in the pathway sulfur metabolism; glutathione biosynthesis; glutathione from L-cysteine and L-glutamate: step 1/2. This is Glutamate--cysteine ligase from Shigella flexneri serotype 5b (strain 8401).